The sequence spans 497 residues: NADH-quinone oxidoreductase subunit N (497 aa).

Helical transmembrane passes span 14–34 (LMAM…MLSI), 45–65 (SLTV…WGLF), 86–106 (IFYS…AYPW), 116–136 (EFYL…SAQH), 137–157 (LAAV…LLGY), 171–191 (YFVL…MLYA), 215–235 (ILAG…LVPF), 253–273 (FLGT…FLYV), 281–301 (LNTA…LMAL), 309–329 (LLGY…IALH), 338–358 (VAVY…VVSL), 385–405 (AAVM…LGFI), 420–439 (WVLT…YYLR), and 461–481 (AFTA…VFGI).

It belongs to the complex I subunit 2 family. As to quaternary structure, NDH-1 is composed of 13 different subunits. Subunits NuoA, H, J, K, L, M, N constitute the membrane sector of the complex.

Its subcellular location is the cell membrane. It carries out the reaction a quinone + NADH + 5 H(+)(in) = a quinol + NAD(+) + 4 H(+)(out). NDH-1 shuttles electrons from NADH, via FMN and iron-sulfur (Fe-S) centers, to quinones in the respiratory chain. The immediate electron acceptor for the enzyme in this species is believed to be ubiquinone. Couples the redox reaction to proton translocation (for every two electrons transferred, four hydrogen ions are translocated across the cytoplasmic membrane), and thus conserves the redox energy in a proton gradient. The polypeptide is NADH-quinone oxidoreductase subunit N (Hamiltonella defensa subsp. Acyrthosiphon pisum (strain 5AT)).